The sequence spans 864 residues: Leucine--tRNA ligase (864 aa).

The 'HIGH' region signature appears at 42–52; sequence PYPSGKLHMGH. Positions 624–628 match the 'KMSKS' region motif; sequence KMSKS. Position 627 (Lys627) interacts with ATP.

The protein belongs to the class-I aminoacyl-tRNA synthetase family.

Its subcellular location is the cytoplasm. The catalysed reaction is tRNA(Leu) + L-leucine + ATP = L-leucyl-tRNA(Leu) + AMP + diphosphate. This chain is Leucine--tRNA ligase, found in Burkholderia pseudomallei (strain 1710b).